A 422-amino-acid chain; its full sequence is MTIIVDIIGREILDSRGNPTVEVDVHLENGIVGRAFVPSGASKGAHEAVELRDGGIRYQGKGVERAVAAVNGEILEELVGRDARNQIAIDQAMIALDGTPNKARLGANAILGVSLAVAKAAAESLCLPLYRYIGGTQAHVLPTPMMNIINGGVHADNSIDFQEFMIIPVGASTLKEAVRYGAEIFHMLKKRLKDAGHNTNVGDEGGFAPQFKSAEQAIDFIMESIITCGYKPGEQIALGLDCASTEFYKNGSYFYKGEGKCRNTQEQVDYLAQLVKTYPIITIEDGMAEDDWEGWKLLTDSIGKQCQLVGDDLFVTNSARLRDGIKMGAANSILIKMNQIGTLSETLDAVETAHRASYRAIISHRSGETEDSFIADLAVATNCGQIKTGSLARSDRLAKYNQLIRIEEMLGAQACYAGNWHC.

Residue Q162 participates in (2R)-2-phosphoglycerate binding. The active-site Proton donor is the E204. The Mg(2+) site is built by D241, E284, and D311. Positions 336, 365, 366, and 387 each coordinate (2R)-2-phosphoglycerate. K336 serves as the catalytic Proton acceptor.

Belongs to the enolase family. Mg(2+) is required as a cofactor.

The protein resides in the cytoplasm. The protein localises to the secreted. It is found in the cell surface. It carries out the reaction (2R)-2-phosphoglycerate = phosphoenolpyruvate + H2O. Its pathway is carbohydrate degradation; glycolysis; pyruvate from D-glyceraldehyde 3-phosphate: step 4/5. Functionally, catalyzes the reversible conversion of 2-phosphoglycerate (2-PG) into phosphoenolpyruvate (PEP). It is essential for the degradation of carbohydrates via glycolysis. This chain is Enolase, found in Bartonella quintana (strain Toulouse) (Rochalimaea quintana).